The following is a 406-amino-acid chain: Inner kinetochore subunit OKP1 (406 aa).

Disordered stretches follow at residues 1-37 (MAAD…SDSS) and 59-122 (TQSK…TSGE). Positions 8–21 (FLQNIENDSINNGQ) are enriched in polar residues. Residues 26–37 (SPNRSSSESDSS) show a composition bias toward low complexity. Residues 69 to 78 (NSDDAEEGEI) are compositionally biased toward acidic residues. Ser-70 is subject to Phosphoserine. 2 stretches are compositionally biased toward basic and acidic residues: residues 79-89 (EERTNKEEGQY) and 97-106 (LRFEVGKEST). A compositionally biased stretch (polar residues) spans 107-122 (GKLQSHLSDGSATSGE). The stretch at 239 to 285 (SKRQFIQNRYSQELQNNERLEAILSREQNLLEETRKLCMNLKTNNKK) forms a coiled coil. The tract at residues 317-340 (MHPDGPVTFRNDSHELNLMLNDPI) is CTF19-MCM21 binding motif. The interaction with NKP1-NKP2 stretch occupies residues 353–400 (VLSLLPSLKEYTKKSKELKETMGQMISDSHEEEIKEVFVPHHESHQDK). The tract at residues 379 to 406 (SDSHEEEIKEVFVPHHESHQDKTEEDIH) is disordered. A compositionally biased stretch (basic and acidic residues) spans 380-406 (DSHEEEIKEVFVPHHESHQDKTEEDIH).

Belongs to the CENP-Q/OKP1 family. In terms of assembly, component of the heterotetrameric kinetochore subcomplex COMA, which consists of AME1, CTF19, MCM21 and OKP1. The COMA subcomplex is part of a larger constitutive centromere-associated network (CCAN) (also known as central kinetochore CTF19 complex in yeast), which is composed of at least AME1, CHL4, CNN1, CTF3, CTF19, IML3, MCM16, MCM21, MCM22, MHF1, MHF2, MIF2, NKP1, NKP2, OKP1 and WIP1. COMA binds the centromeric nucleosome-binding protein MIF2, and to the outer kinetochore MIND subcomplex. OKP1 interacts directly with AME1, with an NKP1-NKP2 dimer, and with CTF19-MCM21.

It is found in the nucleus. It localises to the chromosome. The protein resides in the centromere. The protein localises to the kinetochore. Functionally, component of the kinetochore, a multiprotein complex that assembles on centromeric DNA and attaches chromosomes to spindle microtubules, mediating chromosome segregation and sister chromatid segregation during meiosis and mitosis. Component of the inner kinetochore COMA complex, which connects centromere-associated proteins and the outer kinetochore. COMA interacts with other inner kinetochore proteins to form the inner kinetochore constitutive centromere-associated network (CCAN), which serves as a structural platform for outer kinetochore assembly. The sequence is that of Inner kinetochore subunit OKP1 from Saccharomyces cerevisiae (strain ATCC 204508 / S288c) (Baker's yeast).